A 179-amino-acid chain; its full sequence is Peptidyl-tRNA hydrolase 2, mitochondrial (179 aa).

Residues 10–32 (YLTNPGALSLAAGVACGVCLGWG) traverse the membrane as a helical segment. Residues K76, K81, K95, K106, K115, K171, and K177 each participate in a glycyl lysine isopeptide (Lys-Gly) (interchain with G-Cter in ubiquitin) cross-link.

This sequence belongs to the PTH2 family. In terms of assembly, monomer. Post-translationally, ubiquitinated by PRKN during mitophagy, leading to its degradation and enhancement of mitophagy. Deubiquitinated by USP30.

The protein localises to the mitochondrion outer membrane. It carries out the reaction an N-acyl-L-alpha-aminoacyl-tRNA + H2O = an N-acyl-L-amino acid + a tRNA + H(+). Its function is as follows. Peptidyl-tRNA hydrolase which releases tRNAs from the ribosome during protein synthesis. Promotes caspase-independent apoptosis by regulating the function of two transcriptional regulators, AES and TLE1. In Bos taurus (Bovine), this protein is Peptidyl-tRNA hydrolase 2, mitochondrial (PTRH2).